The following is a 688-amino-acid chain: DNA-directed RNA polymerase subunit beta' (688 aa).

4 residues coordinate Zn(2+): C69, C71, C87, and C90. Residues D493, D495, and D497 each contribute to the Mg(2+) site.

It belongs to the RNA polymerase beta' chain family. RpoC1 subfamily. In terms of assembly, in plastids the minimal PEP RNA polymerase catalytic core is composed of four subunits: alpha, beta, beta', and beta''. When a (nuclear-encoded) sigma factor is associated with the core the holoenzyme is formed, which can initiate transcription. The cofactor is Mg(2+). Requires Zn(2+) as cofactor.

Its subcellular location is the plastid. It localises to the chloroplast. It carries out the reaction RNA(n) + a ribonucleoside 5'-triphosphate = RNA(n+1) + diphosphate. In terms of biological role, DNA-dependent RNA polymerase catalyzes the transcription of DNA into RNA using the four ribonucleoside triphosphates as substrates. In Chloranthus spicatus (Chulantree), this protein is DNA-directed RNA polymerase subunit beta'.